We begin with the raw amino-acid sequence, 270 residues long: Oxidoreductase NAD-binding domain-containing protein 1 (270 aa).

In terms of domain architecture, FAD-binding FR-type spans 20–123; that stretch reads MELFSARVCD…VGGNFYFDPQ (104 aa). Residue 137-142 participates in NAD(+) binding; that stretch reads GVGINP.

This is Oxidoreductase NAD-binding domain-containing protein 1 (oxnad1) from Danio rerio (Zebrafish).